A 162-amino-acid polypeptide reads, in one-letter code: Phenazine biosynthesis protein PhzA2 (162 aa).

It belongs to the PhzA/PhzB family.

It functions in the pathway antibiotic biosynthesis; phenazine biosynthesis. Involved in the biosynthesis of the antibiotic phenazine, a nitrogen-containing heterocyclic molecule having important roles in virulence, competition and biological control. PhzA2 (operon phzA2B2C2E2F2G2) has a role in the biosynthesis of the phenazine during both planktonic growth and biofilm development, and in host infection during biofilm development. The sequence is that of Phenazine biosynthesis protein PhzA2 from Pseudomonas aeruginosa (strain ATCC 15692 / DSM 22644 / CIP 104116 / JCM 14847 / LMG 12228 / 1C / PRS 101 / PAO1).